We begin with the raw amino-acid sequence, 340 residues long: MLFKTIFYQKLQKKVTTLFNLETERVIREIENLNKNNPKVIFQAPEGLKLKVEKEIEKIKQYFKQKNINIEIYLWGNTCFGACDLIDNHVKNLNVDLIIHYGHEKLSYANPEIKTLFIPAYHIFNKDEEEKILNDIKNFIEKHKSGGKKVAIATTIQYKKLLKDFNPSIILGCRGEVKEGDVILFVGTGRFHPLMIAYKYQKEVFIYNPLSKCFDKISEEEINKFIKKRILAISKLLLNKPKKVGVVLSTKKGQCRKRVFDEIIKLLEENDVNYLPILVDNISPDILFYDVDCYIIVACPRIVLDDYILYKKPIYTPEEFKLFLKNSFKYKFDEIKEDDF.

Cys83, Cys173, and Cys299 together coordinate [4Fe-4S] cluster.

It belongs to the DPH1/DPH2 family. Homodimer. Requires [4Fe-4S] cluster as cofactor.

The enzyme catalyses L-histidyl-[translation elongation factor 2] + S-adenosyl-L-methionine = 2-[(3S)-amino-3-carboxypropyl]-L-histidyl-[translation elongation factor 2] + S-methyl-5'-thioadenosine + H(+). It functions in the pathway protein modification; peptidyl-diphthamide biosynthesis. In terms of biological role, catalyzes the first step of diphthamide biosynthesis, i.e. the transfer of the 3-amino-3-carboxypropyl group from S-adenosyl-L-methionine (SAM) to the C2 position of the imidazole ring of the target histidine residue in translation elongation factor 2 (EF-2). The polypeptide is 2-(3-amino-3-carboxypropyl)histidine synthase (dph2) (Methanocaldococcus jannaschii (strain ATCC 43067 / DSM 2661 / JAL-1 / JCM 10045 / NBRC 100440) (Methanococcus jannaschii)).